A 184-amino-acid polypeptide reads, in one-letter code: Acetyl-CoA decarbonylase/synthase complex subunit epsilon 1 (184 aa).

The protein belongs to the CdhB family. As to quaternary structure, heterotetramer of two alpha and two epsilon subunits. The ACDS complex is made up of alpha, epsilon, beta, gamma and delta subunits with a probable stoichiometry of (alpha(2)epsilon(2))(4)-beta(8)-(gamma(1)delta(1))(8).

Part of a complex that catalyzes the reversible cleavage of acetyl-CoA, allowing autotrophic growth from CO(2). The alpha-epsilon subcomponent functions as a carbon monoxide dehydrogenase. The precise role of the epsilon subunit is unclear; it may have a stabilizing role within the alpha(2)epsilon(2) component and/or be involved in electron transfer to FAD during a potential FAD-mediated CO oxidation. This is Acetyl-CoA decarbonylase/synthase complex subunit epsilon 1 (cdhB1) from Archaeoglobus fulgidus (strain ATCC 49558 / DSM 4304 / JCM 9628 / NBRC 100126 / VC-16).